Here is a 581-residue protein sequence, read N- to C-terminus: Interleukin-22 receptor subunit alpha-1 (581 aa).

The signal sequence occupies residues 1–15; that stretch reads MKTLLTILTVGSLAA. Residues 16–230 lie on the Extracellular side of the membrane; the sequence is HTTVDTSGLL…TLPDRTWAYS (215 aa). Fibronectin type-III domains are found at residues 18–115 and 141–221; these read TVDT…RFSS and PTLT…RVKT. Cysteine 71 and cysteine 79 are joined by a disulfide. Asparagine 80 and asparagine 172 each carry an N-linked (GlcNAc...) asparagine glycan. Cysteine 128 and cysteine 217 are disulfide-bonded. The helical transmembrane segment at 231–251 threads the bilayer; sequence FSGAVLFSMGFLVGLLCYLGY. Residues 252–581 lie on the Cytoplasmic side of the membrane; sequence KYITKPPVPP…GLALTVQWES (330 aa). The interval 343–364 is disordered; that stretch reads QQTLSPPSYAPKAVPEVQPPSY. Phosphoserine; by GSK3-beta is present on residues serine 410 and serine 414. Lysine 449 participates in a covalent cross-link: Glycyl lysine isopeptide (Lys-Gly) (interchain with G-Cter in ubiquitin).

This sequence belongs to the type II cytokine receptor family. Heterodimer with IL10RB and with IL20RB. In terms of processing, phosphorylated by GSK3-BETA and MAPK; phosphorylation by GSK3-BETA stabilizes IL22RA1 by preventing its proteasomal degradation. As to expression, expressed in kidney, liver and lung.

It is found in the cell membrane. Component of the receptor for IL20, IL22 and IL24. Component of IL22 receptor formed by IL22RA1 and IL10RB enabling IL22 signaling via JAK/STAT pathways. IL22 also induces activation of MAPK1/MAPK3 and Akt kinases pathways. Component of one of the receptor for IL20 and IL24 formed by IL22RA1 and IL20RB also signaling through STATs activation. Mediates IL24 antiangiogenic activity as well as IL24 inhibitory effect on endothelial cell tube formation and differentiation. This Mus musculus (Mouse) protein is Interleukin-22 receptor subunit alpha-1 (Il22ra1).